A 95-amino-acid polypeptide reads, in one-letter code: uncharacterized protein (95 aa).

Lysine 21 contacts phosphate. Aspartate 44 serves as a coordination point for Mg(2+). Asparagine 47 serves as a coordination point for phosphate.

This sequence belongs to the HAD-like hydrolase superfamily. Cof family. It depends on Mg(2+) as a cofactor.

This is an uncharacterized protein from Geobacillus stearothermophilus (Bacillus stearothermophilus).